Here is a 154-residue protein sequence, read N- to C-terminus: Large ribosomal subunit protein uL13 (154 aa).

The protein belongs to the universal ribosomal protein uL13 family. As to quaternary structure, part of the 50S ribosomal subunit.

Functionally, this protein is one of the early assembly proteins of the 50S ribosomal subunit, although it is not seen to bind rRNA by itself. It is important during the early stages of 50S assembly. This Rhizobium etli (strain CIAT 652) protein is Large ribosomal subunit protein uL13.